The chain runs to 372 residues: Ciliary neurotrophic factor receptor subunit alpha (372 aa).

An N-terminal signal peptide occupies residues 1-22 (MAAPVPWACCAVLAAAAAVVYA). Residues 27 to 104 (PQEAPHVQYE…WHLRHQVLLH (78 aa)) form the Ig-like C2-type domain. Cysteine 46 and cysteine 89 form a disulfide bridge. 4 N-linked (GlcNAc...) asparagine glycosylation sites follow: asparagine 60, asparagine 70, asparagine 142, and asparagine 190. Fibronectin type-III domains lie at 108–205 (PPRE…VKPD) and 206–306 (PPEN…TEEP). The WSXWS motif motif lies at 290–294 (WSDWS). The tract at residues 301–340 (PWTEEPRHLTTEAQAAETTTSTTSSLAPPPTTKICDPGEL) is disordered. Positions 311-326 (TEAQAAETTTSTTSSL) are enriched in low complexity. A lipid anchor (GPI-anchor amidated serine) is attached at serine 342. The propeptide at 343–372 (GGGPSAPFLVSVPITLALAAAAATASSLLI) is removed in mature form.

This sequence belongs to the type I cytokine receptor family. Type 3 subfamily. In terms of assembly, forms a heterotrimer with LIFR and IL6ST. Interacts with heterodimeric neurotropic cytokine composed of CLCF1/CLC and CRLF1/CLF-1. Either alone or in complex with the heterodimer CLCF1-CRLF1 interacts with SORL1; this interaction may promote internalization and lysosomal degradation. Component of a receptor complex composed of IL6ST/GP130, IL27RA/WSX1 and CNTFR which interacts with the neuroprotective peptide humanin. As to expression, nervous system and skeletal muscle.

The protein resides in the cell membrane. Functionally, binds to CNTF. The alpha subunit provides the receptor specificity. Receptor for heterodimeric neurotropic cytokine composed of CLCF1/CLC and CRLF1/CLF-1. Acts as a receptor for the neuroprotective peptide humanin as part of a complex with IL6ST/GP130 and IL27RA/WSX1. The protein is Ciliary neurotrophic factor receptor subunit alpha (CNTFR) of Homo sapiens (Human).